The chain runs to 100 residues: NADH-quinone oxidoreductase subunit K (100 aa).

A run of 3 helical transmembrane segments spans residues 2–22 (IPLQ…LTGV), 28–48 (LLFM…AFVV), and 60–80 (VMFI…LALL).

It belongs to the complex I subunit 4L family. NDH-1 is composed of 13 different subunits. Subunits NuoA, H, J, K, L, M, N constitute the membrane sector of the complex.

It localises to the cell inner membrane. It carries out the reaction a quinone + NADH + 5 H(+)(in) = a quinol + NAD(+) + 4 H(+)(out). Functionally, NDH-1 shuttles electrons from NADH, via FMN and iron-sulfur (Fe-S) centers, to quinones in the respiratory chain. The immediate electron acceptor for the enzyme in this species is believed to be ubiquinone. Couples the redox reaction to proton translocation (for every two electrons transferred, four hydrogen ions are translocated across the cytoplasmic membrane), and thus conserves the redox energy in a proton gradient. In Erwinia tasmaniensis (strain DSM 17950 / CFBP 7177 / CIP 109463 / NCPPB 4357 / Et1/99), this protein is NADH-quinone oxidoreductase subunit K.